The following is a 2752-amino-acid chain: MYNGIGLPTPRGSGTNGYVQRNLSLVRGRRGERPDYKGEEELRRLEAALVKRPNPDILDHERKRRVELRCLELEEMMEEQGYEEQQIQEKVATFRLMLLEKDVNPGGKEETPGQRPAVTETHQLAELNEKKNERLRAAFGISDSYVDGSSFDPQRRAREAKQPAPEPPKPYSLVRESSSSRSPTPKQKKKKKKKDRGRRSESSSPRRERKKSSKKKKHRSESESKKRKHRSPTPKSKRKSKDKKRKRSRSTTPAPKSRRAHRSTSADSASSSDTSRSRSRSAAAKTHTTALAGRSPSPASGRRGEGDAPFSEPGTTSTQRPSSPETATKQPSSPYEDKDKDKKEKSATRPSPSPERSSTGPEPPAPTPLLAERHGGSPQPLATTPLSQEPVNPPSEASPTRDRSPPKSPEKLPQSSSSESSPPSPQPTKVSRHASSSPESPKPAPAPGSHREISSSPTSKNRSHGRAKRDKSHSHTPSRRMGRSRSPATAKRGRSRSRTPTKRGHSRSRSPQWRRSRSAQRWGRSRSPQRRGRSRSPQRPGWSRSRNTQRRGRSRSARRGRSHSRSPATRGRSRSRTPARRGRSRSRTPARRRSRSRTPTRRRSRSRTPARRGRSRSRTPARRRSRTRSPVRRRSRSRSPARRSGRSRSRTPARRGRSRSRTPARRGRSRSRTPARRSGRSRSRTPARRGRSRSRTPRRGRSRSRSLVRRGRSHSRTPQRRGRSGSSSERKNKSRTSQRRSRSNSSPEMKKSRISSRRSRSLSSPRSKAKSRLSLRRSLSGSSPCPKQKSQTPPRRSRSGSSQPKAKSRTPPRRSRSSSSPPPKQKSKTPSRQSHSSSSPHPKVKSGTPPRQGSITSPQANEQSVTPQRRSCFESSPDPELKSRTPSRHSCSGSSPPRVKSSTPPRQSPSRSSSPQPKVKAIISPRQRSHSGSSSPSPSRVTSRTTPRRSRSVSPCSNVESRLLPRYSHSGSSSPDTKVKPETPPRQSHSGSISPYPKVKAQTPPGPSLSGSKSPCPQEKSKDSLVQSCPGSLSLCAGVKSSTPPGESYFGVSSLQLKGQSQTSPDHRSDTSSPEVRQSHSESPSLQSKSQTSPKGGRSRSSSPVTELASRSPIRQDRGEFSASPMLKSGMSPEQSRFQSDSSSYPTVDSNSLLGQSRLETAESKEKMALPPQEDATASPPRQKDKFSPFPVQDRPESSLVFKDTLRTPPRERSGAGSSPETKEQNSALPTSSQDEELMEVVEKSEEPAGQILSHLSSELKEMSTSNFESSPEVEERPAVSLTLDQSQSQASLEAVEVPSMASSWGGPHFSPEHKELSNSPLRENSFGSPLEFRNSGPLGTEMNTGFSSEVKEDLNGPFLNQLETDPSLDMKEQSTRSSGHSSSELSPDAVEKAGMSSNQSISSPVLDAVPRTPSRERSSSASSPEMKDGLPRTPSRRSRSGSSPGLRDGSGTPSRHSLSGSSPGMKDIPRTPSRGRSECDSSPEPKALPQTPRPRSRSPSSPELNNKCLTPQRERSGSESSVDQKTVARTPLGQRSRSGSSQELDVKPSASPQERSESDSSPDSKAKTRTPLRQRSRSGSSPEVDSKSRLSPRRSRSGSSPEVKDKPRAAPRAQSGSDSSPEPKAPAPRALPRRSRSGSSSKGRGPSPEGSSSTESSPEHPPKSRTARRGSRSSPEPKTKSRTPPRRRSSRSSPELTRKARLSRRSRSASSSPETRSRTPPRHRRSPSVSSPEPAEKSRSSRRRRSASSPRTKTTSRRGRSPSPKPRGLQRSRSRSRREKTRTTRRRDRSGSSQSTSRRRQRSRSRSRVTRRRRGGSGYHSRSPARQESSRTSSRRRRGRSRTPPTSRKRSRSRTSPAPWKRSRSRASPATHRRSRSRTPLISRRRSRSRTSPVSRRRSRSRTSVTRRRSRSRASPVSRRRSRSRTPPVTRRRSRSRTPTTRRRSRSRTPPVTRRRSRSRTPPVTRRRSRSRTSPITRRRSRSRTSPVTRRRSRSRTSPVTRRRSRSRTSPVTRRRSRSRTPPAIRRRSRSRTPLLPRKRSRSRSPLAIRRRSRSRTPRTARGKRSLTRSPPAIRRRSASGSSSDRSRSATPPATRNHSGSRTPPVALNSSRMSCFSRPSMSPTPLDRCRSPGMLEPLGSSRTPMSVLQQAGGSMMDGPGPRIPDHQRTSVPENHAQSRIALALTAISLGTARPPPSMSAAGLAARMSQVPAPVPLMSLRTAPAANLASRIPAASAAAMNLASARTPAIPTAVNLADSRTPAAAAAMNLASPRTAVAPSAVNLADPRTPTAPAVNLAGARTPAALAALSLTGSGTPPTAANYPSSSRTPQAPASANLVGPRSAHATAPVNIAGSRTAAALAPASLTSARMAPALSGANLTSPRVPLSAYERVSGRTSPPLLDRARSRTPPSAPSQSRMTSERAPSPSSRMGQAPSQSLLPPAQDQPRSPVPSAFSDQSRCLIAQTTPVAGSQSLSSGAVATTTSSAGDHNGMLSVPAPGVPHSDVGEPPASTGAQQPSALAALQPAKERRSSSSSSSSSSSSSSSSSSSSSSSSSGSSSSDSEGSSLPVQPEVALKRVPSPTPAPKEAVREGRPPEPTPAKRKRRSSSSSSSSSSSSSSSSSSSSSSSSSSSSSSSSSSSSSSSSSSPSPAKPGPQALPKPASPKKPPPGERRSRSPRKPIDSLRDSRSLSYSPVERRRPSPQPSPRDQQSSSSERGSRRGQRGDSRSPSHKRRRETPSPRPMRHRSSRSP.

M1 is modified (N-acetylmethionine). Positions 60–92 (HERKRRVELRCLELEEMMEEQGYEEQQIQEKVA) form a coiled coil. An N6-acetyllysine modification is found at K101. Residues K108 and K130 each participate in a glycyl lysine isopeptide (Lys-Gly) (interchain with G-Cter in SUMO2) cross-link. The disordered stretch occupies residues 141–2131 (ISDSYVDGSS…MSPTPLDRCR (1991 aa)). Y145 is subject to Phosphotyrosine. K169 is subject to N6-acetyllysine. Positions 175–185 (RESSSSRSPTP) are enriched in low complexity. Composition is skewed to basic residues over residues 186 to 197 (KQKKKKKKKDRG) and 207 to 249 (RERK…KRSR). Positions 197–259 (GRRSESSSPR…STTPAPKSRR (63 aa)) are sufficient for RNA-binding. S220 and S222 each carry phosphoserine. Over residues 263-290 (STSADSASSSDTSRSRSRSAAAKTHTTA) the composition is skewed to low complexity. A Phosphothreonine modification is found at T286. S295, S297, S300, S322, and S323 each carry phosphoserine. Residues 313–333 (PGTTSTQRPSSPETATKQPSS) show a composition bias toward polar residues. Residues 335–347 (YEDKDKDKKEKSA) show a composition bias toward basic and acidic residues. A compositionally biased stretch (low complexity) spans 348–360 (TRPSPSPERSSTG). A phosphoserine mark is found at S351, S353, S357, and S358. Phosphothreonine is present on residues T359 and T367. Residue S377 is modified to Phosphoserine. Over residues 380 to 398 (PLATTPLSQEPVNPPSEAS) the composition is skewed to polar residues. Phosphothreonine is present on residues T383 and T384. 5 positions are modified to phosphoserine: S387, S395, S398, S404, and S408. The span at 399-410 (PTRDRSPPKSPE) shows a compositional bias: basic and acidic residues. Low complexity predominate over residues 411 to 421 (KLPQSSSSESS). Phosphoserine is present on residues S424, S435, S436, S437, S440, and S454. Basic residues predominate over residues 461-483 (NRSHGRAKRDKSHSHTPSRRMGR). Phosphoserine is present on residues S484, S486, S506, S508, S510, S534, S536, and S543. Residues 491–536 (KRGRSRSRTPTKRGHSRSRSPQWRRSRSAQRWGRSRSPQRRGRSRS) are compositionally biased toward basic residues. Over residues 537–546 (PQRPGWSRSR) the composition is skewed to low complexity. Composition is skewed to basic residues over residues 547-564 (NTQR…RSHS), 571-723 (GRSR…RRGR), and 732-742 (NKSRTSQRRSR). Phosphoserine is present on residues S702, S704, and S706. 3 positions are modified to phosphoserine: S778, S780, and S783. Residues 790–805 (SQTPPRRSRSGSSQPK) show a composition bias toward low complexity. The segment covering 806 to 816 (AKSRTPPRRSR) has biased composition (basic residues). The span at 828-841 (KTPSRQSHSSSSPH) shows a compositional bias: low complexity. A phosphoserine mark is found at S846 and S854. Residues 849 to 869 (PPRQGSITSPQANEQSVTPQR) are compositionally biased toward polar residues. Phosphothreonine is present on T856. 2 positions are modified to phosphoserine: S857 and S864. Phosphothreonine is present on T866. A phosphoserine mark is found at S871, S875, S876, S908, S935, S950, S952, S954, S957, S968, S970, S972, S973, and S974. Composition is skewed to low complexity over residues 901–917 (SSTP…SPQP) and 924–945 (SPRQ…TSRT). Phosphothreonine is present on residues T977 and T983. A phosphoserine mark is found at S992 and S994. Y996 is subject to Phosphotyrosine. T1003 carries the post-translational modification Phosphothreonine. A compositionally biased stretch (low complexity) spans 1008–1017 (SLSGSKSPCP). Phosphoserine is present on residues S1010, S1014, S1024, S1028, S1032, and S1042. The span at 1040–1064 (KSSTPPGESYFGVSSLQLKGQSQTS) shows a compositional bias: polar residues. Phosphothreonine is present on T1043. Residue Y1049 is modified to Phosphotyrosine. Residues S1064, S1069, S1072, S1073, S1083, S1099, S1101, S1102, and S1103 each carry the phosphoserine modification. Residues 1071 to 1092 (TSSPEVRQSHSESPSLQSKSQT) show a composition bias toward polar residues. A compositionally biased stretch (low complexity) spans 1093–1104 (SPKGGRSRSSSP). T1106 bears the Phosphothreonine mark. A phosphoserine mark is found at S1112, S1122, S1124, S1129, S1132, S1152, S1179, S1188, and S1198. Positions 1132 to 1159 (SPEQSRFQSDSSSYPTVDSNSLLGQSRL) are enriched in polar residues. The segment covering 1204–1214 (DTLRTPPRERS) has biased composition (basic and acidic residues). Residue T1208 is modified to Phosphothreonine. Phosphoserine occurs at positions 1214, 1219, 1227, 1254, 1257, 1258, 1266, 1270, and 1271. Residues 1216–1233 (AGSSPETKEQNSALPTSS) are compositionally biased toward polar residues. Over residues 1283 to 1292 (TLDQSQSQAS) the composition is skewed to polar residues. A phosphoserine mark is found at S1311, S1318, S1320, S1326, S1329, S1336, S1348, S1368, S1382, S1383, S1384, S1387, S1401, S1403, and S1404. Residues 1318–1328 (SNSPLRENSFG) show a composition bias toward polar residues. Over residues 1376–1386 (TRSSGHSSSEL) the composition is skewed to polar residues. T1413 carries the phosphothreonine modification. Residues S1415, S1421, S1423, and S1424 each carry the phosphoserine modification. The residue at position 1434 (T1434) is a Phosphothreonine. The span at 1441-1452 (SGSSPGLRDGSG) shows a compositional bias: low complexity. A phosphoserine mark is found at S1444 and S1451. T1453 carries the post-translational modification Phosphothreonine. Over residues 1453–1463 (TPSRHSLSGSS) the composition is skewed to polar residues. Phosphoserine occurs at positions 1458, 1460, 1462, and 1463. T1472 carries the post-translational modification Phosphothreonine. Residues S1482 and S1483 each carry the phosphoserine modification. T1492 is subject to Phosphothreonine. Residues S1497, S1499, S1501, and S1502 each carry the phosphoserine modification. At T1511 the chain carries Phosphothreonine. Phosphoserine is present on residues S1517, S1519, S1521, and S1522. Position 1531 is a phosphothreonine (T1531). Residues 1534–1544 (GQRSRSGSSQE) are compositionally biased toward polar residues. Phosphoserine is present on residues S1537, S1539, S1541, S1542, and S1552. The segment covering 1555-1567 (ERSESDSSPDSKA) has biased composition (basic and acidic residues). Basic residues predominate over residues 1568 to 1577 (KTRTPLRQRS). Phosphoserine is present on residues S1577, S1579, S1581, S1582, S1598, S1600, S1601, S1616, S1620, S1621, S1648, S1658, S1691, S1693, and S1694. A compositionally biased stretch (low complexity) spans 1638-1657 (SGSSSKGRGPSPEGSSSTES). A compositionally biased stretch (basic residues) spans 1681-1691 (KSRTPPRRRSS). T1698 is modified (phosphothreonine). S1727, S1729, S1731, S1732, S1762, and S1764 each carry phosphoserine. 2 stretches are compositionally biased toward basic residues: residues 1769–1789 (GLQR…RRRD) and 1798–1816 (SRRR…RRRG). A phosphoserine mark is found at S1818, S1822, S1854, S1857, S1876, and S1878. Over residues 1834–1854 (SSRRRRGRSRTPPTSRKRSRS) the composition is skewed to basic residues. Over residues 1862 to 2068 (KRSRSRASPA…PRTARGKRSL (207 aa)) the composition is skewed to basic residues. T1880 is modified (phosphothreonine). Phosphoserine occurs at positions 1884 and 1890. T1892 bears the Phosphothreonine mark. S1893, S1916, S1919, S1923, and S1925 each carry phosphoserine. Phosphothreonine is present on residues T1927 and T1931. 2 positions are modified to phosphoserine: S1946 and S1948. Phosphothreonine is present on residues T1950 and T1954. Residues S1958 and S1960 each carry the phosphoserine modification. A phosphothreonine mark is found at T1962 and T1966. Residues S1970, S1972, and S1975 each carry the phosphoserine modification. Phosphothreonine is present on T1978. S1984, S1987, S1996, S1999, S2008, S2011, S2018, and S2020 each carry phosphoserine. Residue T2022 is modified to Phosphothreonine. 2 positions are modified to phosphoserine: S2030 and S2032. Residue T2034 is modified to Phosphothreonine. Phosphoserine occurs at positions 2042, 2044, 2046, and 2067. T2069 is modified (phosphothreonine). Positions 2070-2095 (RSPPAIRRRSASGSSSDRSRSATPPA) are enriched in low complexity. 2 positions are modified to phosphoserine: S2071 and S2090. T2092 carries the phosphothreonine modification. Positions 2097–2124 (RNHSGSRTPPVALNSSRMSCFSRPSMSP) are enriched in polar residues. Phosphoserine occurs at positions 2100 and 2102. T2104 is subject to Phosphothreonine. Residues S2118, S2121, S2123, and S2132 each carry the phosphoserine modification. Residue T2144 is modified to Phosphothreonine. An omega-N-methylarginine mark is found at R2194, R2207, R2231, and R2246. Position 2272 is a phosphoserine (S2272). Residues R2274 and R2288 each carry the omega-N-methylarginine modification. Phosphothreonine is present on residues T2289, T2291, and T2302. S2310 carries the post-translational modification Phosphoserine. The disordered stretch occupies residues 2311-2342 (LTGSGTPPTAANYPSSSRTPQAPASANLVGPR). A phosphothreonine mark is found at T2316 and T2329. Residues 2317-2334 (PPTAANYPSSSRTPQAPA) show a composition bias toward polar residues. Position 2335 is a phosphoserine (S2335). At R2342 the chain carries Omega-N-methylarginine. 3 positions are modified to phosphoserine: S2343, S2368, and S2376. T2381 is modified (phosphothreonine). Position 2382 is a phosphoserine (S2382). R2384 is subject to Asymmetric dimethylarginine; alternate. R2384 carries the post-translational modification Omega-N-methylarginine; alternate. The segment at 2389 to 2752 (AYERVSGRTS…PMRHRSSRSP (364 aa)) is disordered. Residues S2394, S2398, and S2407 each carry the phosphoserine modification. Phosphothreonine is present on T2409. Residues S2412, S2415, S2426, S2429, S2449, and S2453 each carry the phosphoserine modification. Residues 2426–2439 (SPSSRMGQAPSQSL) show a composition bias toward polar residues. Residues 2455-2473 (FSDQSRCLIAQTTPVAGSQ) show a composition bias toward polar residues. Low complexity-rich tracts occupy residues 2474 to 2487 (SLSS…TSSA), 2515 to 2526 (AQQPSALAALQP), and 2533 to 2567 (SSSS…EGSS). Position 2581 is a phosphoserine (S2581). T2583 carries the post-translational modification Phosphothreonine. A Glycyl lysine isopeptide (Lys-Gly) (interchain with G-Cter in SUMO2) cross-link involves residue K2587. T2599 carries the post-translational modification Phosphothreonine. Low complexity predominate over residues 2608–2648 (SSSSSSSSSSSSSSSSSSSSSSSSSSSSSSSSSSSSSSSSS). Residues 2651–2668 (PAKPGPQALPKPASPKKP) show a composition bias toward pro residues. 10 positions are modified to phosphoserine: S2664, S2675, S2677, S2684, S2688, S2690, S2692, S2694, S2702, and S2706. A compositionally biased stretch (basic and acidic residues) spans 2669-2689 (PPGERRSRSPRKPIDSLRDSR). The segment covering 2707–2716 (PRDQQSSSSE) has biased composition (low complexity). Residues 2717–2729 (RGSRRGQRGDSRS) show a composition bias toward basic and acidic residues. T2738 is modified (phosphothreonine). Phosphoserine is present on S2740. Over residues 2743–2752 (PMRHRSSRSP) the composition is skewed to basic residues.

It belongs to the CWC21 family. In terms of assembly, component of pre-catalytic, catalytic and post-catalytic spliceosome complexes. Found in a pre-mRNA splicing complex with SFRS4, SFRS5, SNRP70, SNRPA1, SRRM1 and SRRM2. Component of the minor spliceosome, which splices U12-type introns. Interacts with DHX8. Interacts with CACTIN. As to expression, expressed in liver, placenta, and white blood cells.

It is found in the nucleus. Its subcellular location is the nucleus speckle. Its function is as follows. Required for pre-mRNA splicing as component of the spliceosome. As a component of the minor spliceosome, involved in the splicing of U12-type introns in pre-mRNAs. In Homo sapiens (Human), this protein is Serine/arginine repetitive matrix protein 2 (SRRM2).